The chain runs to 867 residues: 2-methylcitrate dehydratase (2-methyl-trans-aconitate forming) (867 aa).

The [4Fe-4S] cluster site is built by C410, C476, and C479.

This sequence belongs to the aconitase/IPM isomerase family. Requires [4Fe-4S] cluster as cofactor.

The catalysed reaction is (2S,3S)-2-methylcitrate = 2-methyl-trans-aconitate + H2O. It catalyses the reaction citrate = D-threo-isocitrate. It functions in the pathway organic acid metabolism; propanoate degradation. Its activity is regulated as follows. Inhibited by ferricyanide and EDTA. Its function is as follows. Involved in the catabolism of short chain fatty acids (SCFA) via the 2-methylcitrate cycle II (propionate degradation route). In vivo under anaerobic conditions, AcnD catalyzes the stereospecific dehydration of (2S,3S)-methylcitrate (2-MC) to yield the trans isomer of 2-methyl-aconitate (2-MCA). AcnD can also accept citrate and cis-aconitate, but with a lower efficiency. 2-methylisocitrate and isocitrate are not substrates. The protein is 2-methylcitrate dehydratase (2-methyl-trans-aconitate forming) (acnD) of Shewanella oneidensis (strain ATCC 700550 / JCM 31522 / CIP 106686 / LMG 19005 / NCIMB 14063 / MR-1).